The sequence spans 260 residues: Ribonuclease HII (260 aa).

An RNase H type-2 domain is found at 73–260 (LHIAGIDEAG…APVQQQLDIV (188 aa)). Residues aspartate 79, glutamate 80, and aspartate 171 each contribute to the a divalent metal cation site.

It belongs to the RNase HII family. The cofactor is Mn(2+). Mg(2+) is required as a cofactor.

Its subcellular location is the cytoplasm. It carries out the reaction Endonucleolytic cleavage to 5'-phosphomonoester.. Functionally, endonuclease that specifically degrades the RNA of RNA-DNA hybrids. This chain is Ribonuclease HII, found in Desulfitobacterium hafniense (strain Y51).